We begin with the raw amino-acid sequence, 832 residues long: Protein wech (832 aa).

The span at 1–14 (MMELLSNNSVPQQM) shows a compositional bias: polar residues. The disordered stretch occupies residues 1–42 (MMELLSNNSVPQQMASSNAPSANNVAHSSTANGSGGGSVSSN). The span at 15 to 32 (ASSNAPSANNVAHSSTAN) shows a compositional bias: low complexity. At serine 107 the chain carries Phosphoserine. B box-type zinc fingers lie at residues 118–163 (NSSI…IVSL) and 184–224 (SGNF…YASI). Zn(2+) is bound by residues cysteine 123, cysteine 126, cysteine 145, histidine 149, cysteine 189, histidine 192, cysteine 211, and histidine 216. Serine 470, serine 475, and serine 506 each carry phosphoserine. 5 NHL repeats span residues 537–580 (SLSF…FNPD), 584–627 (KFKF…FTAS), 631–674 (LLKF…FDSE), 680–722 (QIVF…IDPD), and 727–770 (LSVK…FNQN).

Interacts with the head domain of rhea and the kinase domain of Ilk. Interacts with AGO1. Interacts with mei-P26. In terms of tissue distribution, expressed in ovarian germline stem cells (at protein level). Expressed ubiquitously in all epithelial cells during early stages of embryogenesis. Specifically expressed at epidermal muscle attachment site.

Vital for larval development. Plays a role in tumor formation. A crucial component for the physical link between integrins and the cytoskeleton in the epidermal muscle attachment sites. This chain is Protein wech (wech), found in Drosophila melanogaster (Fruit fly).